The chain runs to 127 residues: MATKLAYRGSEPTKFKKTKIKKDDEVLVISGKEKGKKGKVLAVDKRKDRVYIEGVNKRKRFVRPTQENPGGGAIEIEFPIHISNVMFHDAKAENKAKPKKKIKAVRLGFAKKDGKSVRVTRPEGKEV.

Belongs to the universal ribosomal protein uL24 family. In terms of assembly, part of the 50S ribosomal subunit.

Its function is as follows. One of two assembly initiator proteins, it binds directly to the 5'-end of the 23S rRNA, where it nucleates assembly of the 50S subunit. Functionally, one of the proteins that surrounds the polypeptide exit tunnel on the outside of the subunit. The sequence is that of Large ribosomal subunit protein uL24 from Leptospira biflexa serovar Patoc (strain Patoc 1 / ATCC 23582 / Paris).